The chain runs to 397 residues: Lysosomal acid lipase/cholesteryl ester hydrolase (397 aa).

The first 25 residues, 1 to 25, serve as a signal peptide directing secretion; sequence MQLLGRVICFVVGILLSGGPTGTIS. Positions 26 to 72 are cleaved as a propeptide — removed in mature form; the sequence is AVDPEANMNVTEIIMHWGYPEHSVQTGDGYILGVHRIPHGRKNQFDK. 3 N-linked (GlcNAc...) asparagine glycosylation sites follow: Asn-34, Asn-99, and Asn-159. Residues 84–378 enclose the AB hydrolase-1 domain; sequence HGFLADSSNW…EWDHLDFIWG (295 aa). Ser-172 acts as the Charge relay system in catalysis. Residues Asn-271 and Asn-319 are each glycosylated (N-linked (GlcNAc...) asparagine). His-372 serves as the catalytic Charge relay system.

The protein belongs to the AB hydrolase superfamily. Lipase family. As to quaternary structure, monomer. In terms of processing, glycosylation is not essential for catalytic activity.

The protein localises to the lysosome. It catalyses the reaction a sterol ester + H2O = a sterol + a fatty acid + H(+). The catalysed reaction is cholesteryl (9Z-octadecenoate) + H2O = cholesterol + (9Z)-octadecenoate + H(+). It carries out the reaction a triacylglycerol + H2O = a 1,2-diacylglycerol + a fatty acid + H(+). The enzyme catalyses 1,2-di-(9Z-octadecenoyl)-glycerol + (9Z)-octadecenoate + H(+) = 1,2,3-tri-(9Z-octadecenoyl)-glycerol + H2O. It catalyses the reaction a 1,2-diacylglycerol + H2O = a 1-acylglycerol + a fatty acid + H(+). The catalysed reaction is 1,2-di-(9Z-octadecenoyl)-glycerol + H2O = 1-(9Z-octadecenoyl)-glycerol + (9Z)-octadecenoate + H(+). It carries out the reaction a 1,3-diacylglycerol + H2O = a 1-acylglycerol + a fatty acid + H(+). The enzyme catalyses 1,3-di-(9Z-octadecenoyl)-glycerol + H2O = 1-(9Z-octadecenoyl)-glycerol + (9Z)-octadecenoate + H(+). In terms of biological role, catalyzes the deacylation of cholesteryl ester core lipids of endocytosed low density lipoproteins to generate free fatty acids and cholesterol. Hydrolyzes triglycerides (1,2,3-triacylglycerol) and diglycerides (such as 1,2-diacylglycerol and 1,3-diacylglycerol) with preference for the acyl moieties at the sn-1 or sn-3 positions. The polypeptide is Lysosomal acid lipase/cholesteryl ester hydrolase (Lipa) (Rattus norvegicus (Rat)).